The primary structure comprises 1006 residues: Probable sulfite reductase [NADPH] flavoprotein component (1006 aa).

In terms of domain architecture, FAD-binding FR-type spans 622 to 852 (EKVFTVHVRA…AVKTSVMKLP (231 aa)). Residues 658–669 (YDIGEALGVYGV) and 788–798 (IKRREYSISSS) each bind FAD.

FAD serves as cofactor. The cofactor is FMN.

It catalyses the reaction hydrogen sulfide + 3 NADP(+) + 3 H2O = sulfite + 3 NADPH + 4 H(+). Its pathway is sulfur metabolism; hydrogen sulfide biosynthesis; hydrogen sulfide from sulfite (NADPH route): step 1/1. In terms of biological role, this enzyme catalyzes the 6-electron reduction of sulfite to sulfide. This is one of several activities required for the biosynthesis of L-cysteine from sulfate. The chain is Probable sulfite reductase [NADPH] flavoprotein component from Schizosaccharomyces pombe (strain 972 / ATCC 24843) (Fission yeast).